The sequence spans 361 residues: Large ribosomal subunit protein uL3 (361 aa).

Residues 1–14 show a composition bias toward basic residues; it reads MGRGGRRNPGRPRR. Disordered regions lie at residues 1–33 and 337–361; these read MGRG…PRIR and TSQQ…PASA.

Belongs to the universal ribosomal protein uL3 family. As to quaternary structure, part of the 50S ribosomal subunit. Forms a cluster with proteins L14 and L24e.

In terms of biological role, one of the primary rRNA binding proteins, it binds directly near the 3'-end of the 23S rRNA, where it nucleates assembly of the 50S subunit. This is Large ribosomal subunit protein uL3 from Methanopyrus kandleri (strain AV19 / DSM 6324 / JCM 9639 / NBRC 100938).